The sequence spans 342 residues: Dual-specificity RNA methyltransferase RlmN (342 aa).

The Proton acceptor role is filled by E92. Residues D98 to E329 enclose the Radical SAM core domain. An intrachain disulfide couples C105 to C334. [4Fe-4S] cluster is bound by residues C112, C116, and C119. S-adenosyl-L-methionine is bound by residues G161 to E162, S193, S215 to H217, and N291. The active-site S-methylcysteine intermediate is the C334.

It belongs to the radical SAM superfamily. RlmN family. Requires [4Fe-4S] cluster as cofactor.

It localises to the cytoplasm. The catalysed reaction is adenosine(2503) in 23S rRNA + 2 reduced [2Fe-2S]-[ferredoxin] + 2 S-adenosyl-L-methionine = 2-methyladenosine(2503) in 23S rRNA + 5'-deoxyadenosine + L-methionine + 2 oxidized [2Fe-2S]-[ferredoxin] + S-adenosyl-L-homocysteine. The enzyme catalyses adenosine(37) in tRNA + 2 reduced [2Fe-2S]-[ferredoxin] + 2 S-adenosyl-L-methionine = 2-methyladenosine(37) in tRNA + 5'-deoxyadenosine + L-methionine + 2 oxidized [2Fe-2S]-[ferredoxin] + S-adenosyl-L-homocysteine. Functionally, specifically methylates position 2 of adenine 2503 in 23S rRNA and position 2 of adenine 37 in tRNAs. m2A2503 modification seems to play a crucial role in the proofreading step occurring at the peptidyl transferase center and thus would serve to optimize ribosomal fidelity. This chain is Dual-specificity RNA methyltransferase RlmN, found in Syntrophobacter fumaroxidans (strain DSM 10017 / MPOB).